A 283-amino-acid chain; its full sequence is ATP phosphoribosyltransferase (283 aa).

It belongs to the ATP phosphoribosyltransferase family. Long subfamily. Mg(2+) is required as a cofactor.

It is found in the cytoplasm. It catalyses the reaction 1-(5-phospho-beta-D-ribosyl)-ATP + diphosphate = 5-phospho-alpha-D-ribose 1-diphosphate + ATP. Its pathway is amino-acid biosynthesis; L-histidine biosynthesis; L-histidine from 5-phospho-alpha-D-ribose 1-diphosphate: step 1/9. With respect to regulation, feedback inhibited by histidine. Its function is as follows. Catalyzes the condensation of ATP and 5-phosphoribose 1-diphosphate to form N'-(5'-phosphoribosyl)-ATP (PR-ATP). Has a crucial role in the pathway because the rate of histidine biosynthesis seems to be controlled primarily by regulation of HisG enzymatic activity. This is ATP phosphoribosyltransferase from Salinibacter ruber (strain DSM 13855 / M31).